The primary structure comprises 894 residues: Exocyst complex component 2 (894 aa).

One can recognise an IPT/TIG domain in the interval 5 to 89 (PVVTGLSPKE…GTSTVQFRAY (85 aa)). Residues 398–413 (HTSKDSGAQEKAKNRD) are compositionally biased toward basic and acidic residues. The disordered stretch occupies residues 398–417 (HTSKDSGAQEKAKNRDSSQA).

It belongs to the SEC5 family. As to quaternary structure, the exocyst complex is composed of Sec3/Exoc1, Sec5/Exoc2, Sec6/Exoc3, Sec8/Exoc4, Sec10/Exoc5, Sec15/Exoc6, Exo70/Exoc7 and Exo84/Exoc8.

Its function is as follows. Component of the exocyst complex involved in the docking of exocytic vesicles with fusion sites on the plasma membrane. The chain is Exocyst complex component 2 from Drosophila melanogaster (Fruit fly).